The sequence spans 219 residues: Virginiamycin A acetyltransferase (219 aa).

His-87 is an active-site residue.

Belongs to the transferase hexapeptide repeat family.

Its function is as follows. Inactivates the A compounds of virginiamycin-like antibiotics, thus providing resistance to these antibiotics. The protein is Virginiamycin A acetyltransferase (vat) of Staphylococcus aureus.